The primary structure comprises 547 residues: Chaperonin GroEL 1 (547 aa).

Residues 30-33 (TLGP), Lys51, 87-91 (DGTTT), Gly415, and Asp496 contribute to the ATP site.

This sequence belongs to the chaperonin (HSP60) family. As to quaternary structure, forms a cylinder of 14 subunits composed of two heptameric rings stacked back-to-back. Interacts with the co-chaperonin GroES.

It is found in the cytoplasm. It catalyses the reaction ATP + H2O + a folded polypeptide = ADP + phosphate + an unfolded polypeptide.. Its function is as follows. Together with its co-chaperonin GroES, plays an essential role in assisting protein folding. The GroEL-GroES system forms a nano-cage that allows encapsulation of the non-native substrate proteins and provides a physical environment optimized to promote and accelerate protein folding. In Rhodopseudomonas palustris (strain ATCC BAA-98 / CGA009), this protein is Chaperonin GroEL 1.